Reading from the N-terminus, the 234-residue chain is Phosphoribosylaminoimidazole-succinocarboxamide synthase (234 aa).

It belongs to the SAICAR synthetase family.

The catalysed reaction is 5-amino-1-(5-phospho-D-ribosyl)imidazole-4-carboxylate + L-aspartate + ATP = (2S)-2-[5-amino-1-(5-phospho-beta-D-ribosyl)imidazole-4-carboxamido]succinate + ADP + phosphate + 2 H(+). The protein operates within purine metabolism; IMP biosynthesis via de novo pathway; 5-amino-1-(5-phospho-D-ribosyl)imidazole-4-carboxamide from 5-amino-1-(5-phospho-D-ribosyl)imidazole-4-carboxylate: step 1/2. The polypeptide is Phosphoribosylaminoimidazole-succinocarboxamide synthase (Staphylococcus carnosus (strain TM300)).